The following is a 438-amino-acid chain: UDP-N-acetylmuramoylalanine--D-glutamate ligase (438 aa).

112 to 118 contacts ATP; that stretch reads GSNGKST.

This sequence belongs to the MurCDEF family.

It is found in the cytoplasm. The enzyme catalyses UDP-N-acetyl-alpha-D-muramoyl-L-alanine + D-glutamate + ATP = UDP-N-acetyl-alpha-D-muramoyl-L-alanyl-D-glutamate + ADP + phosphate + H(+). It functions in the pathway cell wall biogenesis; peptidoglycan biosynthesis. Its function is as follows. Cell wall formation. Catalyzes the addition of glutamate to the nucleotide precursor UDP-N-acetylmuramoyl-L-alanine (UMA). In Shigella dysenteriae serotype 1 (strain Sd197), this protein is UDP-N-acetylmuramoylalanine--D-glutamate ligase.